The primary structure comprises 476 residues: Mitochondrial-processing peptidase subunit beta (476 aa).

The N-terminal 28 residues, 1-28 (MASRRLALNLAQGVKARAGGVINPFRRG), are a transit peptide targeting the mitochondrion. Residue His84 coordinates Zn(2+). Catalysis depends on Glu87, which acts as the Proton acceptor. Zn(2+) is bound by residues His88 and Glu164.

It belongs to the peptidase M16 family. Heterodimer of mpp (alpha) and pep (beta) subunits, forming the mitochondrial processing protease (MPP) in which mpp is involved in substrate recognition and binding and pep is the catalytic subunit. Component of the ubiquinol-cytochrome c oxidoreductase (cytochrome b-c1 complex, complex III, CIII), a multisubunit enzyme composed of 10 subunits. The complex is composed of 3 respiratory subunits cytochrome b (cob), cytochrome c1 (cyt-1) and Rieske protein (fes-1), 2 core protein subunits pep and ucr-1, and 5 low-molecular weight protein subunits qcr6, qcr7, qcr8, qcr9 and probably NCU16844/qcr10. The complex exists as an obligatory dimer and forms supercomplexes (SCs) in the inner mitochondrial membrane with NADH-ubiquinone oxidoreductase (complex I, CI) and cytochrome c oxidase (complex IV, CIV), resulting in different assemblies (supercomplexes SCI(1)III(2), SCIII(2)IV(1) and SCIII(2)IV(2) as well as higher order I(x)III(y)IV(z) megacomplexes). Requires Zn(2+) as cofactor.

Its subcellular location is the mitochondrion matrix. The protein localises to the mitochondrion inner membrane. The enzyme catalyses Release of N-terminal transit peptides from precursor proteins imported into the mitochondrion, typically with Arg in position P2.. Binding to mpp is required for catalytic activity. Inhibited by metal chelator ethylenediaminetetraacetic acid (EDTA). In terms of biological role, catalytic subunit of the essential mitochondrial processing protease (MPP), which cleaves the mitochondrial sequence off newly imported precursors proteins. Preferentially, cleaves after an arginine at position P2. Its function is as follows. Component of the ubiquinol-cytochrome c oxidoreductase, a multisubunit transmembrane complex that is part of the mitochondrial electron transport chain which drives oxidative phosphorylation. The respiratory chain contains 3 multisubunit complexes succinate dehydrogenase (complex II, CII), ubiquinol-cytochrome c oxidoreductase (cytochrome b-c1 complex, complex III, CIII) and cytochrome c oxidase (complex IV, CIV), that cooperate to transfer electrons derived from NADH and succinate to molecular oxygen, creating an electrochemical gradient over the inner membrane that drives transmembrane transport and the ATP synthase. The cytochrome b-c1 complex catalyzes electron transfer from ubiquinol to cytochrome c, linking this redox reaction to translocation of protons across the mitochondrial inner membrane, with protons being carried across the membrane as hydrogens on the quinol. In the process called Q cycle, 2 protons are consumed from the matrix, 4 protons are released into the intermembrane space and 2 electrons are passed to cytochrome c. The polypeptide is Mitochondrial-processing peptidase subunit beta (Neurospora crassa (strain ATCC 24698 / 74-OR23-1A / CBS 708.71 / DSM 1257 / FGSC 987)).